Reading from the N-terminus, the 153-residue chain is UPF0311 protein RPA1785 (153 aa).

It belongs to the UPF0311 family.

The protein is UPF0311 protein RPA1785 of Rhodopseudomonas palustris (strain ATCC BAA-98 / CGA009).